We begin with the raw amino-acid sequence, 829 residues long: 1,4-alpha-glucan branching enzyme GlgB (829 aa).

Catalysis depends on aspartate 405, which acts as the Nucleophile. Glutamate 458 (proton donor) is an active-site residue. Positions 758–829 are disordered; it reads ASKATKVSTK…TTAKKTKDNA (72 aa). Composition is skewed to low complexity over residues 778 to 789 and 810 to 820; these read VKAATKSSVTKV and VTKTAKASAKT.

This sequence belongs to the glycosyl hydrolase 13 family. GlgB subfamily. In terms of assembly, monomer.

The enzyme catalyses Transfers a segment of a (1-&gt;4)-alpha-D-glucan chain to a primary hydroxy group in a similar glucan chain.. Its pathway is glycan biosynthesis; glycogen biosynthesis. Catalyzes the formation of the alpha-1,6-glucosidic linkages in glycogen by scission of a 1,4-alpha-linked oligosaccharide from growing alpha-1,4-glucan chains and the subsequent attachment of the oligosaccharide to the alpha-1,6 position. This Actinobacillus succinogenes (strain ATCC 55618 / DSM 22257 / CCUG 43843 / 130Z) protein is 1,4-alpha-glucan branching enzyme GlgB.